Consider the following 515-residue polypeptide: Cytoplasmic tRNA 2-thiolation protein 2 (515 aa).

Disordered stretches follow at residues 1–24 and 188–217; these read MCQV…RPSR and LGAG…ARPP. Cys2 is subject to N-acetylcysteine. Residues Ser415, Ser419, Ser435, and Ser508 each carry the phosphoserine modification.

The protein belongs to the CTU2/NCS2 family. As to quaternary structure, component of a complex at least composed of URM1, CTU2/NCS2 and CTU1/ATPBD3.

It is found in the cytoplasm. It functions in the pathway tRNA modification; 5-methoxycarbonylmethyl-2-thiouridine-tRNA biosynthesis. Its function is as follows. Plays a central role in 2-thiolation of mcm(5)S(2)U at tRNA wobble positions of tRNA(Lys), tRNA(Glu) and tRNA(Gln). May act by forming a heterodimer with CTU1/ATPBD3 that ligates sulfur from thiocarboxylated URM1 onto the uridine of tRNAs at wobble position. This is Cytoplasmic tRNA 2-thiolation protein 2 from Homo sapiens (Human).